The primary structure comprises 558 residues: MYREYIQKTIDLLREATGLEDVMITDGGDHADLASTVSFALAKTQRKNPAVIAGELVAVLSAKPEAKGIEISAKGPYINFIFGGDYVAESVHAARREDYGTLPARTDKVIIEHTSANPNGPLHVGHIRNTVIGDTLVRAFRKAGYPVEAQYYLNDMGRQIAIVAWGVQNLHYDRIPGEKGDEYIVRHYVEANKIAKAKPEIEPEFDLLMEKIEAGDPETVKLFHDSVDICADGIKETLSSMNVVHDKFVRETTFLWNGSMQDVLNRIEKLPIVHHEGQMMYLDLSDEGFGNRYVLRRSNGTSVYAARDLAFHLWKNAQCDRSIDVLGADHKLIGAQLQTTLKLIGERPPEIVHFEFVSLPEGSMTTRGGVFITADELIAETKKRAMEEVTVRRPELGEDEREKIAKAVAVGAVRYDIVKVSAEKSTVFDWKEALDFERQSAPYIQYAHARACSIMEKAKAEGGFAECYEYSDPYELALAKHIARFPYVLEKVVCELRPHLLATYVRDLADLFNSFYRFAPVLKAEGNVRDARLTLVDACRNTLYQALGVLGIEALESM.

Positions Ala-116–His-126 match the 'HIGH' region motif.

The protein belongs to the class-I aminoacyl-tRNA synthetase family.

The protein resides in the cytoplasm. It catalyses the reaction tRNA(Arg) + L-arginine + ATP = L-arginyl-tRNA(Arg) + AMP + diphosphate. The chain is Arginine--tRNA ligase from Methanocorpusculum labreanum (strain ATCC 43576 / DSM 4855 / Z).